The chain runs to 125 residues: VTDSVIGEGCVIKNCKIHHSVVGLRSCISEGAIIEDTLLMGADYYAETEADKKLLAENGGIPIGIGKNSHIRKAIIDKNARIGDNVKILNADNVQEAARETDGYFIKGGIVTVIKDALLPSGTVI.

Belongs to the bacterial/plant glucose-1-phosphate adenylyltransferase family. Heterotetramer. In terms of tissue distribution, leaves.

The protein localises to the plastid. It is found in the chloroplast. It localises to the amyloplast. The catalysed reaction is alpha-D-glucose 1-phosphate + ATP + H(+) = ADP-alpha-D-glucose + diphosphate. Its pathway is glycan biosynthesis; starch biosynthesis. With respect to regulation, activated by 3'phosphoglycerate, inhibited by orthophosphate. Allosteric regulation. Its function is as follows. This protein plays a role in synthesis of starch. It catalyzes the synthesis of the activated glycosyl donor, ADP-glucose from Glc-1-P and ATP. This chain is Glucose-1-phosphate adenylyltransferase small subunit (GLG1), found in Zea mays (Maize).